Consider the following 147-residue polypeptide: Hemoglobin subunit beta-1 (147 aa).

N-acetylvaline is present on V2. The Globin domain occupies 3–147 (HLTGEEKAAV…VATALAHKYH (145 aa)). K18 carries the post-translational modification N6-succinyllysine. S45 carries the post-translational modification Phosphoserine. At K60 the chain carries N6-succinyllysine. H64 and H93 together coordinate heme b. R105 bears the Asymmetric dimethylarginine mark. T124 carries the post-translational modification Phosphothreonine.

It belongs to the globin family. As to quaternary structure, hb1 is a heterotetramer of two alpha chains and two beta-1 chains. In terms of tissue distribution, red blood cells.

Its function is as follows. Involved in oxygen transport from the lung to the various peripheral tissues. The chain is Hemoglobin subunit beta-1 (HBB1) from Chalinolobus morio (Chocolate-wattled bat).